A 142-amino-acid polypeptide reads, in one-letter code: MATFNLTIVSAEQKIFEGEVKQIQVTGVEGELGILPGHTPLLTAIKPGIVKFTLKDGNEEVIYVSGGFLEVQPNIVTVLADIAIRGSELDADRIHEAKRKAEENIVSRGSDADHDLLVAKLSKELAKLRAYELTEKLLKTRR.

Belongs to the ATPase epsilon chain family. F-type ATPases have 2 components, CF(1) - the catalytic core - and CF(0) - the membrane proton channel. CF(1) has five subunits: alpha(3), beta(3), gamma(1), delta(1), epsilon(1). CF(0) has three main subunits: a, b and c.

Its subcellular location is the cell inner membrane. Its function is as follows. Produces ATP from ADP in the presence of a proton gradient across the membrane. In Haemophilus influenzae (strain 86-028NP), this protein is ATP synthase epsilon chain.